The chain runs to 74 residues: Small ribosomal subunit protein bS18 (74 aa).

It belongs to the bacterial ribosomal protein bS18 family. Part of the 30S ribosomal subunit. Forms a tight heterodimer with protein bS6.

Binds as a heterodimer with protein bS6 to the central domain of the 16S rRNA, where it helps stabilize the platform of the 30S subunit. This is Small ribosomal subunit protein bS18 from Coprothermobacter proteolyticus (strain ATCC 35245 / DSM 5265 / OCM 4 / BT).